The primary structure comprises 183 residues: Ferritin light chain 1 (183 aa).

The region spanning 7–156 is the Ferritin-like diiron domain; that stretch reads QNYSTEVEAA…NHLTNLRRVA (150 aa). Fe cation contacts are provided by glutamate 54, glutamate 57, glutamate 58, glutamate 61, and glutamate 64.

This sequence belongs to the ferritin family. In terms of assembly, oligomer of 24 subunits. There are two types of subunits: L (light) chain and H (heavy) chain. The major chain can be light or heavy, depending on the species and tissue type. The functional molecule forms a roughly spherical shell with a diameter of 12 nm and contains a central cavity into which the insoluble mineral iron core is deposited. Interacts with NCOA4.

Its subcellular location is the cytoplasm. The protein resides in the cytoplasmic vesicle. It is found in the autophagosome. It localises to the autolysosome. Its function is as follows. Stores iron in a soluble, non-toxic, readily available form. Important for iron homeostasis. Iron is taken up in the ferrous form and deposited as ferric hydroxides after oxidation. Also plays a role in delivery of iron to cells. Mediates iron uptake in capsule cells of the developing kidney. Degraded to release iron upon autophagy activation by nutrient starvation. This Mus musculus (Mouse) protein is Ferritin light chain 1 (Ftl1).